The following is a 695-amino-acid chain: NADPH--cytochrome P450 reductase (695 aa).

Over 1-8 (MAQLDTLD) the chain is Lumenal. Residues 9-31 (LVVLVALLVGSVAYFTKGTYWAV) form a helical membrane-spanning segment. Over 32–695 (AKDPYASSGP…SGSYQEDVWS (664 aa)) the chain is Cytoplasmic. Residues 66–221 (CVIFYGSQTG…DFLAWKEPMW (156 aa)) enclose the Flavodoxin-like domain. Residues 72-77 (SQTGTA), 123-126 (ATYG), 169-178 (LGNNTYEHYN), and D204 each bind FMN. The FAD-binding FR-type domain maps to 277 to 538 (HNPFIAPIVE…HVRHSNFKLP (262 aa)). Residue R296 participates in NADP(+) binding. Residues 451-454 (RYYS), 469-471 (TAV), and 486-489 (GVTT) contribute to the FAD site. NADP(+) contacts are provided by residues T552, 614-615 (SR), 620-624 (KVYVQ), and E656. FAD is bound at residue W694.

The protein belongs to the NADPH--cytochrome P450 reductase family. This sequence in the N-terminal section; belongs to the flavodoxin family. It in the C-terminal section; belongs to the flavoprotein pyridine nucleotide cytochrome reductase family. FAD serves as cofactor. Requires FMN as cofactor.

The protein resides in the endoplasmic reticulum membrane. It is found in the mitochondrion outer membrane. Its subcellular location is the cell membrane. It carries out the reaction 2 oxidized [cytochrome P450] + NADPH = 2 reduced [cytochrome P450] + NADP(+) + H(+). Functionally, this enzyme is required for electron transfer from NADP to cytochrome P450 in microsomes. It can also provide electron transfer to heme oxygenase and cytochrome B5. Involved in ergosterol biosynthesis. This Aspergillus oryzae (strain ATCC 42149 / RIB 40) (Yellow koji mold) protein is NADPH--cytochrome P450 reductase.